Consider the following 317-residue polypeptide: Probable arabinan endo-1,5-alpha-L-arabinosidase C (317 aa).

A signal peptide spans Met-1–Ala-17. Asp-32 (proton acceptor) is an active-site residue. Residue Asn-190 is glycosylated (N-linked (GlcNAc...) asparagine). Residue Glu-198 is the Proton donor of the active site.

Belongs to the glycosyl hydrolase 43 family.

The protein localises to the secreted. It carries out the reaction Endohydrolysis of (1-&gt;5)-alpha-arabinofuranosidic linkages in (1-&gt;5)-arabinans.. The protein operates within glycan metabolism; L-arabinan degradation. Its function is as follows. Endo-1,5-alpha-L-arabinanase involved in degradation of pectin. Its preferred substrate is linear 1,5-alpha-L-arabinan. In Aspergillus flavus (strain ATCC 200026 / FGSC A1120 / IAM 13836 / NRRL 3357 / JCM 12722 / SRRC 167), this protein is Probable arabinan endo-1,5-alpha-L-arabinosidase C (abnC).